A 420-amino-acid polypeptide reads, in one-letter code: Trophoblast glycoprotein (420 aa).

An N-terminal signal peptide occupies residues 1-31 (MPGGCSRGPAAGDGRLRLARLALVLLGWVSS). Over 32–355 (SSPTSSASSF…PILPPSLQTS (324 aa)) the chain is Extracellular. The LRRNT domain maps to 53–91 (SAQPPLPDQCPALCECSEAARTVKCVNRNLTEVPTDLPA). Disulfide bonds link C62-C68 and C66-C77. N81 carries N-linked (GlcNAc...) asparagine glycosylation. LRR repeat units follow at residues 92 to 113 (YVRN…AFAR), 116 to 139 (PLAE…GAFE), 141 to 163 (LPSL…FAFS), 172 to 204 (PSPL…AALL), 209 to 232 (LQGL…VLAQ), 233 to 255 (LPSL…VSFR), and 256 to 275 (NLTH…VLHN). N-linked (GlcNAc...) asparagine glycosylation occurs at N124. N275 is a glycosylation site (N-linked (GlcNAc...) asparagine). The region spanning 283–346 (GLPHIRVFLD…LNSADLDCDP (64 aa)) is the LRRCT domain. 2 disulfides stabilise this stretch: C298/C323 and C300/C344. The chain crosses the membrane as a helical span at residues 356–376 (YVFLGIVLALIGAIFLLVLYL). The Cytoplasmic portion of the chain corresponds to 377 to 420 (NRKGIKKWMHNIRDACRDHMEGYHYRYEINADPRLTNLSSNSDV). Phosphoserine is present on S418.

Highly glycosylated. As to expression, expressed by all types of trophoblasts as early as 9 weeks of development. Specific for trophoblastic cells except for amniotic epithelium. In adult tissues, the expression is limited to a few epithelial cell types but is found on a variety of carcinoma.

It is found in the cell membrane. Its function is as follows. May function as an inhibitor of Wnt/beta-catenin signaling by indirectly interacting with LRP6 and blocking Wnt3a-dependent LRP6 internalization. In Homo sapiens (Human), this protein is Trophoblast glycoprotein (TPBG).